We begin with the raw amino-acid sequence, 357 residues long: Homoserine kinase (357 aa).

This sequence belongs to the GHMP kinase family. Homoserine kinase subfamily. In terms of assembly, homodimer.

It carries out the reaction L-homoserine + ATP = O-phospho-L-homoserine + ADP + H(+). The protein operates within amino-acid biosynthesis; L-threonine biosynthesis; L-threonine from L-aspartate: step 4/5. Functionally, commits homoserine to the threonine biosynthesis pathway by catalyzing its O-phosphorylation. The sequence is that of Homoserine kinase (THR1) from Candida albicans (strain SC5314 / ATCC MYA-2876) (Yeast).